We begin with the raw amino-acid sequence, 159 residues long: MNISIISVGKIKEKFLKAAIDEYSKRLSKYCKLNIIEVTDEKTPDNASLKEENIIKDKEGNLILKHIKDNSFVIALDLKGKSITSEEFSGLIENCRLTGNSTIAFVIGGSLGLSEQVLSRANYKLSFSKMTFPHQLFRVMLLEQVYRAFRILCGEPYHK.

S-adenosyl-L-methionine contacts are provided by residues leucine 76, glycine 108, and 127-132 (FSKMTF).

It belongs to the RNA methyltransferase RlmH family. Homodimer.

Its subcellular location is the cytoplasm. The catalysed reaction is pseudouridine(1915) in 23S rRNA + S-adenosyl-L-methionine = N(3)-methylpseudouridine(1915) in 23S rRNA + S-adenosyl-L-homocysteine + H(+). Its function is as follows. Specifically methylates the pseudouridine at position 1915 (m3Psi1915) in 23S rRNA. The protein is Ribosomal RNA large subunit methyltransferase H of Clostridium botulinum (strain Langeland / NCTC 10281 / Type F).